A 311-amino-acid polypeptide reads, in one-letter code: MNNISIKCLKSEKIQSGACHGQFLINSLNPGQGITIGNQLRRVLLGDLGGVAISAVRIAGITHEFSTIPGVREDILEILLNLKGIICTSQIQDTQFGHLKVQGPSVVTADLIQLPPGVEIINPNHYIATISTSNILEIEFKFEYGSGYHLASQNFVEEDENYLQLDTIFMPVQKVDFKIENIYDATNNISERLFLDIWTNGSISPNDALESAAQVIIDLFTLLINNKNINNNNRLELKPETISIEPYTNIAIEELQLSVRAYNCLKKAQINTVGDLLQYSPEKLQELKNFGRKSADEVFSTLKNKLGIILK.

The tract at residues 1–227 (MNNISIKCLK…DLFTLLINNK (227 aa)) is alpha N-terminal domain (alpha-NTD). Residues 242–311 (ISIEPYTNIA…LKNKLGIILK (70 aa)) form an alpha C-terminal domain (alpha-CTD) region.

The protein belongs to the RNA polymerase alpha chain family. In terms of assembly, in plastids the minimal PEP RNA polymerase catalytic core is composed of four subunits: alpha, beta, beta', and beta''. When a (nuclear-encoded) sigma factor is associated with the core the holoenzyme is formed, which can initiate transcription.

It is found in the plastid. It localises to the chloroplast. It catalyses the reaction RNA(n) + a ribonucleoside 5'-triphosphate = RNA(n+1) + diphosphate. In terms of biological role, DNA-dependent RNA polymerase catalyzes the transcription of DNA into RNA using the four ribonucleoside triphosphates as substrates. This chain is DNA-directed RNA polymerase subunit alpha, found in Phaeodactylum tricornutum (strain CCAP 1055/1).